A 313-amino-acid chain; its full sequence is uncharacterized protein (313 aa).

Positions 8, 10, 126, 180, 207, and 262 each coordinate a divalent metal cation.

The protein belongs to the metallo-dependent hydrolases superfamily. TatD-type hydrolase family. The cofactor is a divalent metal cation.

Its function is as follows. Putative deoxyribonuclease. This is an uncharacterized protein from Saccharomyces cerevisiae (strain ATCC 204508 / S288c) (Baker's yeast).